Here is an 80-residue protein sequence, read N- to C-terminus: Large ribosomal subunit protein uL24 (80 aa).

The interval 53–80 (HMRPTQSNPQGSIIEREFPIHASNVKKS) is disordered.

The protein belongs to the universal ribosomal protein uL24 family. Part of the 50S ribosomal subunit.

One of two assembly initiator proteins, it binds directly to the 5'-end of the 23S rRNA, where it nucleates assembly of the 50S subunit. Its function is as follows. One of the proteins that surrounds the polypeptide exit tunnel on the outside of the subunit. This chain is Large ribosomal subunit protein uL24, found in Chlorobium luteolum (strain DSM 273 / BCRC 81028 / 2530) (Pelodictyon luteolum).